The sequence spans 397 residues: ATP-dependent RNA helicase eIF4A (397 aa).

A Q motif motif is present at residues 24–52 (DSFDEMNLKPELLRGIYAYGFERPSAIQQ). The Helicase ATP-binding domain occupies 55-225 (IMPVIKGHDV…TKFMREPVRI (171 aa)). 68-75 (AQSGTGKT) provides a ligand contact to ATP. Positions 173–176 (DEAD) match the DEAD box motif. Positions 236–397 (GIKQFYIAVE…EMPMNVADLI (162 aa)) constitute a Helicase C-terminal domain.

This sequence belongs to the DEAD box helicase family. eIF4A subfamily. As to quaternary structure, component of the eIF4F complex, which composition varies with external and internal environmental conditions. It is composed of at least eIF4A, eIF4E and eIF4G.

It localises to the cytoplasm. It carries out the reaction ATP + H2O = ADP + phosphate + H(+). In terms of biological role, ATP-dependent RNA helicase which is a subunit of the eIF4F complex involved in cap recognition and is required for mRNA binding to ribosome. In the current model of translation initiation, eIF4A unwinds RNA secondary structures in the 5'-UTR of mRNAs which is necessary to allow efficient binding of the small ribosomal subunit, and subsequent scanning for the initiator codon. The polypeptide is ATP-dependent RNA helicase eIF4A (tif-1) (Neurospora crassa (strain ATCC 24698 / 74-OR23-1A / CBS 708.71 / DSM 1257 / FGSC 987)).